A 273-amino-acid chain; its full sequence is 3-((Z)-2-isocyanoethenyl)-1H-indole synthase (273 aa).

Fe cation is bound by residues histidine 105, aspartate 107, and histidine 254.

The protein belongs to the TfdA dioxygenase family. Fe(2+) is required as a cofactor.

The enzyme catalyses (2S)-3-(1H-indol-3-yl)-2-isocyanopropanoate + 2-oxoglutarate + O2 + H(+) = 3-[(Z)-2-isocyanoethenyl]-1H-indole + succinate + 2 CO2 + H2O. In terms of biological role, involved in the biosynthesis of ambiguines, a family of hapalindole-type alkaloids. Responsible for the synthesis of Z-3-(2-isocyanoethen)-indole, a biosynthetic precursor to all ambiguines. This is 3-((Z)-2-isocyanoethenyl)-1H-indole synthase from Fischerella ambigua (strain UTEX 1903).